The following is a 92-amino-acid chain: Small ribosomal subunit protein uS19 (92 aa).

This sequence belongs to the universal ribosomal protein uS19 family.

Functionally, protein S19 forms a complex with S13 that binds strongly to the 16S ribosomal RNA. In Beijerinckia indica subsp. indica (strain ATCC 9039 / DSM 1715 / NCIMB 8712), this protein is Small ribosomal subunit protein uS19.